The primary structure comprises 287 residues: Probable 18S rRNA (guanine-N(7))-methyltransferase (287 aa).

The interval 214 to 287 is disordered; sequence GVEGEEYEQQ…FSGRKRGPKF (74 aa). Positions 217–228 are enriched in acidic residues; sequence GEEYEQQEEEDS. Over residues 234–245 the composition is skewed to basic residues; sequence SNRKRDRRRVTK. Over residues 253-278 the composition is skewed to basic and acidic residues; that stretch reads KTKEWIMNKKDRQRKQGREIKNDSKF.

This sequence belongs to the class I-like SAM-binding methyltransferase superfamily. BUD23/WBSCR22 family.

Its subcellular location is the nucleus. It localises to the nucleoplasm. It is found in the cytoplasm. The protein resides in the perinuclear region. It catalyses the reaction a guanosine in 18S rRNA + S-adenosyl-L-methionine = an N(7)-methylguanosine in 18S rRNA + S-adenosyl-L-homocysteine. In terms of biological role, S-adenosyl-L-methionine-dependent methyltransferase that specifically methylates the N(7) position of a guanine in 18S rRNA. Important for biogenesis end export of the 40S ribosomal subunit independent on its methyltransferase activity. Functionally, S-adenosyl-L-methionine-dependent methyltransferase that specifically methylates the N(7) position of a guanine in 18S rRNA. Requires the methyltransferase adapter protein TRM112 for full rRNA methyltransferase activity. Involved in the pre-rRNA processing steps leading to small-subunit rRNA production independently of its RNA-modifying catalytic activity. Important for biogenesis end export of the 40S ribosomal subunit independent on its methyltransferase activity. The protein is Probable 18S rRNA (guanine-N(7))-methyltransferase of Dictyostelium discoideum (Social amoeba).